Consider the following 213-residue polypeptide: Probable thymidylate kinase 2 (213 aa).

10-17 (GIDGSGKS) is a binding site for ATP.

Belongs to the thymidylate kinase family.

It catalyses the reaction dTMP + ATP = dTDP + ADP. This is Probable thymidylate kinase 2 (tmk2) from Saccharolobus solfataricus (strain ATCC 35092 / DSM 1617 / JCM 11322 / P2) (Sulfolobus solfataricus).